The sequence spans 306 residues: UDP-3-O-acyl-N-acetylglucosamine deacetylase (306 aa).

Residues H79, H238, and D242 each contribute to the Zn(2+) site. H265 functions as the Proton donor in the catalytic mechanism.

This sequence belongs to the LpxC family. The cofactor is Zn(2+).

The enzyme catalyses a UDP-3-O-[(3R)-3-hydroxyacyl]-N-acetyl-alpha-D-glucosamine + H2O = a UDP-3-O-[(3R)-3-hydroxyacyl]-alpha-D-glucosamine + acetate. It functions in the pathway glycolipid biosynthesis; lipid IV(A) biosynthesis; lipid IV(A) from (3R)-3-hydroxytetradecanoyl-[acyl-carrier-protein] and UDP-N-acetyl-alpha-D-glucosamine: step 2/6. Functionally, catalyzes the hydrolysis of UDP-3-O-myristoyl-N-acetylglucosamine to form UDP-3-O-myristoylglucosamine and acetate, the committed step in lipid A biosynthesis. In Shewanella halifaxensis (strain HAW-EB4), this protein is UDP-3-O-acyl-N-acetylglucosamine deacetylase.